The primary structure comprises 590 residues: Ras-specific guanine nucleotide-releasing factor RalGPS2 (590 aa).

In terms of domain architecture, Ras-GEF spans 49-287 (TPEEYAGQIT…YKLSLKIEPG (239 aa)). A disordered region spans residues 288–319 (ASTPRSAASREDLAGPDIGASPQGGRKSSAAA). Ser293, Ser296, and Ser308 each carry phosphoserine. The short motif at 331–334 (PQTP) is the PXXP element. Thr333 carries the post-translational modification Phosphothreonine. Phosphoserine occurs at positions 336 and 350. Residue Thr368 is modified to Phosphothreonine. Residues 380–413 (DSVMEPHAPSRGQAESSTLSSGISIGSSDGSELS) form a disordered region. Ser381 is subject to Phosphoserine. Over residues 394-410 (ESSTLSSGISIGSSDGS) the composition is skewed to low complexity. A Phosphoserine modification is found at Ser429. In terms of domain architecture, PH spans 464-576 (AVTIQGVLRR…WFKHLSAACQ (113 aa)). The interval 466 to 590 (TIQGVLRRKT…QVPTNLMTFE (125 aa)) is required for stimulation of nucleotide exchange by RALA.

As to quaternary structure, interacts with RALA. Interacts with the SH3 domains of GRB2 and PLCG1. As to expression, abundant in brain and testis.

Its subcellular location is the cytoplasm. The protein localises to the cell membrane. In terms of biological role, guanine nucleotide exchange factor for the small GTPase RALA. May be involved in cytoskeletal organization. May also be involved in the stimulation of transcription in a Ras-independent fashion. This Mus musculus (Mouse) protein is Ras-specific guanine nucleotide-releasing factor RalGPS2 (Ralgps2).